The primary structure comprises 552 residues: Protein psiB (552 aa).

The first 18 residues, 1 to 18 (MKLLSVLITFLLATVIYS), serve as a signal peptide directing secretion. A glycan (N-linked (GlcNAc...) asparagine) is linked at Asn60. The region spanning 114-255 (TYDTTRNIYV…EDYCGVCQGD (142 aa)) is the PA14 domain. N-linked (GlcNAc...) asparagine glycans are attached at residues Asn281, Asn313, Asn340, Asn365, Asn446, Asn472, and Asn521.

The protein belongs to the prespore-cell-inducing factor family.

The protein localises to the secreted. In Dictyostelium discoideum (Social amoeba), this protein is Protein psiB (psiB).